Here is a 618-residue protein sequence, read N- to C-terminus: Baculoviral IAP repeat-containing protein 2 (618 aa).

3 BIR repeats span residues 46-113 (ELYR…CSFI), 184-250 (EEAR…CPFL), and 269-336 (HAAR…CEFL). 4 residues coordinate Zn(2+): Cys306, Cys309, His326, and Cys333. Positions 453–543 (MASDDLSLIR…TLYKNLFVDK (91 aa)) constitute a CARD domain. An RING-type zinc finger spans residues 571–606 (CKVCMDKEVSVVFIPCGHLVVCQECAPSLRKCPICR).

Belongs to the IAP family. As to quaternary structure, interacts with DIABLO/SMAC and with PRSS25; these interactions inhibit apoptotic suppressor activity. Interacts with CASP9. Interacts (via BIR domains) with TRAF2; the interaction is required for IKBKE ubiquitination. Interacts with E2F1, RIPK1, RIPK2, RIPK3, RIPK4, BIRC5/survivin and USP19. HSP90AB1. Interacts with UBXN1. Interacts with GSK3B. Interacts with several death receptors, inclusing FAS, TNFRSF10A and TNFRSF10B. Recruited to TNFRSF10B in the absence of receptor stimulation. When TNFRSF10B is stimulated, further recruited to the receptor and cleaved by caspases. Proteolytic fragments remain associated with TNFRSF10B. In terms of processing, auto-ubiquitinated and degraded by the proteasome in apoptotic cells. Upon stimulation of death receptors, including TNFRSF10B, recruited to receptors and cleaved by caspases. Proteolytic fragments remain associated with the receptors. This cleavage presumably inactivates the protein. Present in many fetal and adult tissues. Mainly expressed in adult skeletal muscle, thymus, testis, ovary, and pancreas, low or absent in brain and peripheral blood leukocytes.

The protein resides in the cytoplasm. The protein localises to the nucleus. It carries out the reaction S-ubiquitinyl-[E2 ubiquitin-conjugating enzyme]-L-cysteine + [acceptor protein]-L-lysine = [E2 ubiquitin-conjugating enzyme]-L-cysteine + N(6)-ubiquitinyl-[acceptor protein]-L-lysine.. Its activity is regulated as follows. The CARD domain inhibits the activation of E3 ubiquitin ligase activity by preventing RING domain dimerization and E2 ubiquitin donor binding and activation. The CARD domain-mediated autoinhibition of the E3 ubiquitin-protein ligase activity suppresses cell proliferation and migration. USP19 regulates the stability of BIRC2/c-IAP1 by preventing its ubiquitination. Its function is as follows. Multi-functional protein which regulates not only caspases and apoptosis, but also modulates inflammatory signaling and immunity, mitogenic kinase signaling, and cell proliferation, as well as cell invasion and metastasis. Acts as an E3 ubiquitin-protein ligase regulating NF-kappa-B signaling and regulates both canonical and non-canonical NF-kappa-B signaling by acting in opposite directions: acts as a positive regulator of the canonical pathway and suppresses constitutive activation of non-canonical NF-kappa-B signaling. The target proteins for its E3 ubiquitin-protein ligase activity include: RIPK1, RIPK2, RIPK3, RIPK4, CASP3, CASP7, CASP8, TRAF2, DIABLO/SMAC, MAP3K14/NIK, MAP3K5/ASK1, IKBKG/NEMO, IKBKE and MXD1/MAD1. Can also function as an E3 ubiquitin-protein ligase of the NEDD8 conjugation pathway, targeting effector caspases for neddylation and inactivation. Acts as an important regulator of innate immune signaling via regulation of Toll-like receptors (TLRs), Nodlike receptors (NLRs) and RIG-I like receptors (RLRs), collectively referred to as pattern recognition receptors (PRRs). Protects cells from spontaneous formation of the ripoptosome, a large multi-protein complex that has the capability to kill cancer cells in a caspase-dependent and caspase-independent manner. Suppresses ripoptosome formation by ubiquitinating RIPK1 and CASP8. Can stimulate the transcriptional activity of E2F1. Plays a role in the modulation of the cell cycle. In Homo sapiens (Human), this protein is Baculoviral IAP repeat-containing protein 2 (BIRC2).